A 351-amino-acid chain; its full sequence is GDSL esterase/lipase At3g14820 (351 aa).

A signal peptide spans Met1–Ala22. An N-linked (GlcNAc...) asparagine glycan is attached at Asn25. The Nucleophile role is filled by Ser39. Catalysis depends on residues Asp325 and His328.

This sequence belongs to the 'GDSL' lipolytic enzyme family.

It localises to the secreted. This chain is GDSL esterase/lipase At3g14820, found in Arabidopsis thaliana (Mouse-ear cress).